The sequence spans 440 residues: IAA-amino acid hydrolase ILR1-like 4 (440 aa).

Residues 1-23 form the signal peptide; sequence MSFFKWVSFVLILHLLNPTLISC. Mn(2+) contacts are provided by Cys134, His136, Glu170, His194, and His397. A Prevents secretion from ER motif is present at residues 437-440; sequence KDEL.

This sequence belongs to the peptidase M20 family. The cofactor is Mn(2+). In terms of tissue distribution, expressed in leaves, stems, roots, siliques and flowers. Detected in the vascular tissue of cotyledons and roots, in adult leaves, stems, siliques, petals, hydathodes and in silique abscission zones and funicles.

The protein resides in the endoplasmic reticulum lumen. It carries out the reaction a jasmonyl-L-amino acid + H2O = a jasmonate + an L-alpha-amino acid. Hydrolyzes certain amino acid conjugates of the plant growth regulator indole-3-acetic acid (IAA), including IAA-Ala, IAA-Asn, IAA-Cys, IAA-Glu, IAA-Met, IAA-Ser and IAA-Gly. Has a lower efficiency with IAA-Phe, IAA-Leu and IAA-Val and no activity with IAA-Ile. Important for IAA-Leu hydrolysis in roots. Also hydrolyzes amino acid conjugates of jasmonic acid and 12-hydroxy jasmonic acid. This chain is IAA-amino acid hydrolase ILR1-like 4, found in Arabidopsis thaliana (Mouse-ear cress).